The following is a 424-amino-acid chain: Hemagglutinin-esterase (424 aa).

2 consecutive signal peptides follow at residues 1–16 and 1–18; these read MFLLLRFVLVSCIIGS and MFLLLRFVLVSCIIGSLG. An esterase domain 1 region spans residues 7 to 127; it reads FVLVSCIIGS…SNDIWMQNKG (121 aa). Residues 17 to 392 are Virion surface-facing; it reads LGFDNPPTNV…PICVYDPLPL (376 aa). Ser-40 serves as the catalytic Nucleophile. An intrachain disulfide couples Cys-44 to Cys-65. Asn-54, Asn-89, Asn-153, Asn-236, and Asn-301 each carry an N-linked (GlcNAc...) asparagine; by host glycan. Cystine bridges form between Cys-113-Cys-162, Cys-197-Cys-276, and Cys-205-Cys-249. A receptor binding region spans residues 128 to 266; that stretch reads LFYTQVYKNM…GNYLAISNEL (139 aa). An esterase domain 2 region spans residues 267–379; sequence LLTVPTKAIC…RCPTAADINT (113 aa). A disulfide bridge connects residues Cys-307 and Cys-312. The N-linked (GlcNAc...) asparagine; by host glycan is linked to Asn-316. Residues Asp-326 and His-329 each act as charge relay system in the active site. The cysteines at positions 347 and 371 are disulfide-linked. The N-linked (GlcNAc...) asparagine; by host glycan is linked to Asn-358. The chain crosses the membrane as a helical span at residues 393 to 413; that stretch reads ILLGILLGVAVIIIVVLLLYF. The Intravirion segment spans residues 414-424; the sequence is MVDNGTRLHDA. Asn-417 carries an N-linked (GlcNAc...) asparagine; by host glycan.

Belongs to the influenza type C/coronaviruses hemagglutinin-esterase family. Homodimer; disulfide-linked. Forms a complex with the M protein in the pre-Golgi. Associates then with S-M complex to form a ternary complex S-M-HE. Post-translationally, N-glycosylated in the host RER.

It is found in the virion membrane. The protein localises to the host cell membrane. It carries out the reaction N-acetyl-9-O-acetylneuraminate + H2O = N-acetylneuraminate + acetate + H(+). It catalyses the reaction N-acetyl-4-O-acetylneuraminate + H2O = N-acetylneuraminate + acetate + H(+). Its function is as follows. Structural protein that makes short spikes at the surface of the virus. Contains receptor binding and receptor-destroying activities. Mediates de-O-acetylation of N-acetyl-4-O-acetylneuraminic acid, which is probably the receptor determinant recognized by the virus on the surface of erythrocytes and susceptible cells. This receptor-destroying activity is important for virus release as it probably helps preventing self-aggregation and ensures the efficient spread of the progeny virus from cell to cell. May serve as a secondary viral attachment protein for initiating infection, the spike protein being the major one. May become a target for both the humoral and the cellular branches of the immune system. The protein is Hemagglutinin-esterase of Bos taurus (Bovine).